A 329-amino-acid chain; its full sequence is uncharacterized protein (329 aa).

9 helical membrane passes run Asn-5–Val-24, Ile-34–Phe-56, Phe-92–Gly-114, Ile-124–Tyr-146, Ser-159–Leu-181, Thr-196–Leu-218, Phe-231–Tyr-253, Leu-263–Gly-285, and Phe-306–Thr-328.

The protein resides in the cell membrane. This is an uncharacterized protein from Archaeoglobus fulgidus (strain ATCC 49558 / DSM 4304 / JCM 9628 / NBRC 100126 / VC-16).